The primary structure comprises 544 residues: CTP synthase (544 aa).

The segment at 1–265 is amidoligase domain; that stretch reads MTKFIFVTGG…DNIITEQLQL (265 aa). CTP is bound at residue serine 13. Serine 13 lines the UTP pocket. Residues 14-19 and aspartate 71 contribute to the ATP site; that span reads SLGKGI. 2 residues coordinate Mg(2+): aspartate 71 and glutamate 139. CTP-binding positions include 146–148, 186–191, and lysine 222; these read DIE and KTKPTQ. UTP is bound by residues 186-191 and lysine 222; that span reads KTKPTQ. The 255-residue stretch at 290-544 folds into the Glutamine amidotransferase type-1 domain; that stretch reads KIAMVGKYVD…VKAALNNKKA (255 aa). L-glutamine is bound at residue glycine 353. Catalysis depends on cysteine 380, which acts as the Nucleophile; for glutamine hydrolysis. Residues 381–384, glutamate 404, and arginine 471 contribute to the L-glutamine site; that span reads LGMQ. Catalysis depends on residues histidine 517 and glutamate 519.

Belongs to the CTP synthase family. Homotetramer.

The catalysed reaction is UTP + L-glutamine + ATP + H2O = CTP + L-glutamate + ADP + phosphate + 2 H(+). It carries out the reaction L-glutamine + H2O = L-glutamate + NH4(+). It catalyses the reaction UTP + NH4(+) + ATP = CTP + ADP + phosphate + 2 H(+). It participates in pyrimidine metabolism; CTP biosynthesis via de novo pathway; CTP from UDP: step 2/2. With respect to regulation, allosterically activated by GTP, when glutamine is the substrate; GTP has no effect on the reaction when ammonia is the substrate. The allosteric effector GTP functions by stabilizing the protein conformation that binds the tetrahedral intermediate(s) formed during glutamine hydrolysis. Inhibited by the product CTP, via allosteric rather than competitive inhibition. Catalyzes the ATP-dependent amination of UTP to CTP with either L-glutamine or ammonia as the source of nitrogen. Regulates intracellular CTP levels through interactions with the four ribonucleotide triphosphates. In Neisseria meningitidis serogroup A / serotype 4A (strain DSM 15465 / Z2491), this protein is CTP synthase.